We begin with the raw amino-acid sequence, 116 residues long: Putative UPF0320 protein YJR162C (116 aa).

The protein belongs to the UPF0320 family.

The sequence is that of Putative UPF0320 protein YJR162C from Saccharomyces cerevisiae (strain ATCC 204508 / S288c) (Baker's yeast).